The chain runs to 63 residues: MSNTQLLEVLGTETFDVQEDLFAFDTTDTTIVASNDDPDTRFKSWSLCTPGCARTGSFNSYCC.

Positions 1-41 (MSNTQLLEVLGTETFDVQEDLFAFDTTDTTIVASNDDPDTR) are excised as a propeptide. Positions 44–48 (SWSLC) form a cross-link, lanthionine (Ser-Cys). Position 46 is a 2,3-didehydroalanine (Ser) (serine 46). The segment at residues 49-52 (TPGC) is a cross-link (beta-methyllanthionine (Thr-Cys)). A 2,3-didehydrobutyrine modification is found at threonine 55. Residues 57–62 (SFNSYC) constitute a cross-link (lanthionine (Ser-Cys)). The segment at residues 60-63 (SYCC) is a cross-link (S-(2-aminovinyl)-D-cysteine (Ser-Cys)).

The protein belongs to the type A lantibiotic family. Maturation of lantibiotics involves the enzymatic conversion of Thr, and Ser into dehydrated AA and the formation of thioether bonds with cysteine. The C-terminal lanthionine undergoes decarboxylation. This is followed by membrane translocation and cleavage of the modified precursor. In terms of processing, the structure of the 2,3-didehydrobutyrine is not discussed in PubMed:11082191.

Functionally, lanthionine-containing peptide antibiotic (lantibiotic) active on Gram-positive bacteria. The bactericidal activity of lantibiotics is based on depolarization of energized bacterial cytoplasmic membranes, initiated by the formation of aqueous transmembrane pores. In Streptococcus mutans, this protein is Lantibiotic mutacin-1140 (lanA).